The sequence spans 86 residues: Large ribosomal subunit protein bL28 (86 aa).

Belongs to the bacterial ribosomal protein bL28 family.

This is Large ribosomal subunit protein bL28 from Bacteroides fragilis (strain ATCC 25285 / DSM 2151 / CCUG 4856 / JCM 11019 / LMG 10263 / NCTC 9343 / Onslow / VPI 2553 / EN-2).